A 262-amino-acid chain; its full sequence is Polyamine aminopropyltransferase (262 aa).

The PABS domain occupies 1–249 (MWITQEITPY…DIHRAAFALP (249 aa)). Asparagine 29 is a binding site for S-methyl-5'-thioadenosine. Residue aspartate 83 coordinates spermidine. The active-site Proton acceptor is aspartate 155.

The protein belongs to the spermidine/spermine synthase family. In terms of assembly, homodimer or homotetramer.

Its subcellular location is the cytoplasm. It catalyses the reaction S-adenosyl 3-(methylsulfanyl)propylamine + putrescine = S-methyl-5'-thioadenosine + spermidine + H(+). Its pathway is amine and polyamine biosynthesis; spermidine biosynthesis; spermidine from putrescine: step 1/1. Functionally, catalyzes the irreversible transfer of a propylamine group from the amino donor S-adenosylmethioninamine (decarboxy-AdoMet) to putrescine (1,4-diaminobutane) to yield spermidine. In Helicobacter acinonychis (strain Sheeba), this protein is Polyamine aminopropyltransferase.